Reading from the N-terminus, the 563-residue chain is Arginine--tRNA ligase (563 aa).

The 'HIGH' region motif lies at 119-129 (ANPTGPLHVGR).

Belongs to the class-I aminoacyl-tRNA synthetase family.

The protein resides in the cytoplasm. The enzyme catalyses tRNA(Arg) + L-arginine + ATP = L-arginyl-tRNA(Arg) + AMP + diphosphate. This Methanocella arvoryzae (strain DSM 22066 / NBRC 105507 / MRE50) protein is Arginine--tRNA ligase.